Here is a 365-residue protein sequence, read N- to C-terminus: Anhydro-N-acetylmuramic acid kinase (365 aa).

12–19 (GTSLDGID) lines the ATP pocket.

It belongs to the anhydro-N-acetylmuramic acid kinase family.

The enzyme catalyses 1,6-anhydro-N-acetyl-beta-muramate + ATP + H2O = N-acetyl-D-muramate 6-phosphate + ADP + H(+). Its pathway is amino-sugar metabolism; 1,6-anhydro-N-acetylmuramate degradation. It participates in cell wall biogenesis; peptidoglycan recycling. Functionally, catalyzes the specific phosphorylation of 1,6-anhydro-N-acetylmuramic acid (anhMurNAc) with the simultaneous cleavage of the 1,6-anhydro ring, generating MurNAc-6-P. Is required for the utilization of anhMurNAc either imported from the medium or derived from its own cell wall murein, and thus plays a role in cell wall recycling. The protein is Anhydro-N-acetylmuramic acid kinase of Rhizorhabdus wittichii (strain DSM 6014 / CCUG 31198 / JCM 15750 / NBRC 105917 / EY 4224 / RW1) (Sphingomonas wittichii).